A 142-amino-acid chain; its full sequence is Prefoldin subunit alpha 2 (142 aa).

Belongs to the prefoldin subunit alpha family. Heterohexamer of two alpha and four beta subunits.

It is found in the cytoplasm. Functionally, molecular chaperone capable of stabilizing a range of proteins. Seems to fulfill an ATP-independent, HSP70-like function in archaeal de novo protein folding. In Thermococcus kodakarensis (strain ATCC BAA-918 / JCM 12380 / KOD1) (Pyrococcus kodakaraensis (strain KOD1)), this protein is Prefoldin subunit alpha 2.